Here is a 68-residue protein sequence, read N- to C-terminus: MKGLLCFIYILSAILIGCVFLNKDVEAFTPYRNEPSHYQTVYESNSSYPKSSLDITGWSYQPSVDDVN.

An N-terminal signal peptide occupies residues 1 to 27; sequence MKGLLCFIYILSAILIGCVFLNKDVEA.

This is an uncharacterized protein from Invertebrate iridescent virus 6 (IIV-6).